The sequence spans 382 residues: Lysophosphatidylserine lipase ABHD12 (382 aa).

Positions 1 to 12 (MRKRKGSADHDS) are enriched in basic and acidic residues. Positions 1-45 (MRKRKGSADHDSSFTATLTDGSSDLKQCHKGTDADTDPGGSGKEM) are disordered. At 1–60 (MRKRKGSADHDSSFTATLTDGSSDLKQCHKGTDADTDPGGSGKEMGRRCRRGGLMWRLRR) the chain is on the cytoplasmic side. Over residues 13–25 (SFTATLTDGSSDL) the composition is skewed to polar residues. Residues 61–81 (ILIWLLGIYIAIPVIIKVCPS) form a helical membrane-spanning segment. Topologically, residues 82 to 382 (IQAKLVFLNF…DFLRAPHPHG (301 aa)) are extracellular. An N-linked (GlcNAc...) asparagine glycan is attached at N109. S232 serves as the catalytic Nucleophile. Active-site charge relay system residues include D319 and H358.

This sequence belongs to the serine esterase family. In terms of tissue distribution, ubiquitously expressed in adult tissues.

Its subcellular location is the endoplasmic reticulum membrane. It catalyses the reaction 1-(9Z-octadecenoyl)-sn-glycero-3-phospho-L-serine + H2O = sn-glycero-3-phospho-L-serine + (9Z)-octadecenoate + H(+). The enzyme catalyses 1-(9Z-octadecenoyl)-sn-glycero-3-phospho-(1'-sn-glycerol) + H2O = sn-glycero-3-phospho-(1'-sn-glycerol) + (9Z)-octadecenoate + H(+). It carries out the reaction 1-(9Z-octadecenoyl)-sn-glycero-3-phospho-(1D-myo-inositol) + H2O = sn-glycero-3-phospho-1D-myo-inositol + (9Z)-octadecenoate + H(+). The catalysed reaction is 1-(9Z-octadecenoyl)-sn-glycero-3-phosphoethanolamine + H2O = sn-glycero-3-phosphoethanolamine + (9Z)-octadecenoate + H(+). It catalyses the reaction 1-(9Z-octadecenoyl)-sn-glycero-3-phosphocholine + H2O = 1-(9Z-octadecenoyl)-sn-glycerol + phosphocholine + H(+). The enzyme catalyses 2-(9Z-octadecenoyl)-glycerol + H2O = glycerol + (9Z)-octadecenoate + H(+). It carries out the reaction 1-hexadecanoyl-sn-glycero-3-phospho-L-serine + H2O = sn-glycero-3-phospho-L-serine + hexadecanoate + H(+). The catalysed reaction is 2-(5Z,8Z,11Z,14Z-eicosatetraenoyl)-glycerol + H2O = glycerol + (5Z,8Z,11Z,14Z)-eicosatetraenoate + H(+). It catalyses the reaction Hydrolyzes glycerol monoesters of long-chain fatty acids.. The enzyme catalyses 1-decanoylglycerol + H2O = decanoate + glycerol + H(+). It carries out the reaction 1-dodecanoylglycerol + H2O = dodecanoate + glycerol + H(+). The catalysed reaction is 1-tetradecanoylglycerol + H2O = tetradecanoate + glycerol + H(+). It catalyses the reaction 2-hexadecanoylglycerol + H2O = glycerol + hexadecanoate + H(+). The enzyme catalyses 1-(9Z-octadecenoyl)-glycerol + H2O = glycerol + (9Z)-octadecenoate + H(+). It carries out the reaction 2-(9Z,12Z-octadecadienoyl)-glycerol + H2O = (9Z,12Z)-octadecadienoate + glycerol + H(+). The catalysed reaction is 1-(5Z,8Z,11Z,14Z-eicosatetraenoyl)-glycerol + H2O = glycerol + (5Z,8Z,11Z,14Z)-eicosatetraenoate + H(+). It catalyses the reaction 1-(9Z,12Z-octadecadienoyl)-glycerol + H2O = (9Z,12Z)-octadecadienoate + glycerol + H(+). The enzyme catalyses 1-hexadecanoylglycerol + H2O = glycerol + hexadecanoate + H(+). It carries out the reaction 1-octadecanoylglycerol + H2O = octadecanoate + glycerol + H(+). The catalysed reaction is 1-octadecanoyl-2-(9,10-epoxyoctadecanoyl)-sn-glycero-3-phospho-L-serine + H2O = 9,10-epoxyoctadecanoate + 1-octadecanoyl-sn-glycero-3-phosphoserine + H(+). It catalyses the reaction 1-octadecanoyl-2-(10-hydroxyoctadecanoyl)-sn-glycero-3-phospho-L-serine + H2O = 1-octadecanoyl-sn-glycero-3-phosphoserine + 10-hydroxyoctadecanoate + H(+). The enzyme catalyses 1-hexadecanoyl-2-(10-hydroxyoctadecanoyl)-sn-glycero-3-phospho-L-serine + H2O = 10-hydroxyoctadecanoate + 1-hexadecanoyl-sn-glycero-3-phospho-L-serine + H(+). Functionally, lysophosphatidylserine (LPS) lipase that mediates the hydrolysis of lysophosphatidylserine, a class of signaling lipids that regulates immunological and neurological processes. Represents a major lysophosphatidylserine lipase in the brain, thereby playing a key role in the central nervous system. Also able to hydrolyze oxidized phosphatidylserine; oxidized phosphatidylserine is produced in response to severe inflammatory stress and constitutes a proapoptotic 'eat me' signal. Also has monoacylglycerol (MAG) lipase activity: hydrolyzes 2-arachidonoylglycerol (2-AG), thereby acting as a regulator of endocannabinoid signaling pathways. Has a strong preference for very-long-chain lipid substrates; substrate specificity is likely due to improved catalysis and not improved substrate binding. This Danio rerio (Zebrafish) protein is Lysophosphatidylserine lipase ABHD12.